Here is a 747-residue protein sequence, read N- to C-terminus: Elongation factor G, mitochondrial (747 aa).

The N-terminal 16 residues, 1 to 16 (MSLIMRVLNGNLSLRL), are a transit peptide targeting the mitochondrion. The 278-residue stretch at 42–319 (ERIRNIGISA…AIIDYLPNPG (278 aa)) folds into the tr-type G domain. GTP is bound by residues 51–58 (AHIDSGKT), 118–122 (DTPGH), and 172–175 (NKLD).

Belongs to the TRAFAC class translation factor GTPase superfamily. Classic translation factor GTPase family. EF-G/EF-2 subfamily.

The protein localises to the mitochondrion. It functions in the pathway protein biosynthesis; polypeptide chain elongation. Its function is as follows. Mitochondrial GTPase that catalyzes the GTP-dependent ribosomal translocation step during translation elongation. During this step, the ribosome changes from the pre-translocational (PRE) to the post-translocational (POST) state as the newly formed A-site-bound peptidyl-tRNA and P-site-bound deacylated tRNA move to the P and E sites, respectively. Catalyzes the coordinated movement of the two tRNA molecules, the mRNA and conformational changes in the ribosome. Essential during development as it acts as a retrograde signal from mitochondria to the nucleus to slow down cell proliferation if mitochondrial energy output is low. The sequence is that of Elongation factor G, mitochondrial from Drosophila grimshawi (Hawaiian fruit fly).